Reading from the N-terminus, the 482-residue chain is ATP synthase subunit beta (482 aa).

Residue 161 to 168 coordinates ATP; that stretch reads GGAGVGKT.

This sequence belongs to the ATPase alpha/beta chains family. As to quaternary structure, F-type ATPases have 2 components, CF(1) - the catalytic core - and CF(0) - the membrane proton channel. CF(1) has five subunits: alpha(3), beta(3), gamma(1), delta(1), epsilon(1). CF(0) has four main subunits: a(1), b(1), b'(1) and c(9-12).

It is found in the cellular thylakoid membrane. It catalyses the reaction ATP + H2O + 4 H(+)(in) = ADP + phosphate + 5 H(+)(out). Functionally, produces ATP from ADP in the presence of a proton gradient across the membrane. The catalytic sites are hosted primarily by the beta subunits. This is ATP synthase subunit beta from Gloeothece citriformis (strain PCC 7424) (Cyanothece sp. (strain PCC 7424)).